A 296-amino-acid chain; its full sequence is Ribose import binding protein RbsB (296 aa).

An N-terminal signal peptide occupies residues Met-1–Ala-25.

It belongs to the bacterial solute-binding protein 2 family. In terms of assembly, the complex is composed of an ATP-binding protein (RbsA), two transmembrane proteins (RbsC) and a solute-binding protein (RbsB).

It is found in the periplasm. Functionally, part of the ABC transporter complex RbsABC involved in ribose import. Binds ribose. The polypeptide is Ribose import binding protein RbsB (rbsB) (Salmonella typhi).